The primary structure comprises 280 residues: Phosphatidylglycerol--prolipoprotein diacylglyceryl transferase (280 aa).

3 helical membrane-spanning segments follow: residues 21 to 41 (WYGI…ISEG), 54 to 74 (LLLW…VIFE), and 88 to 108 (IWNG…VLLI). Arg136 provides a ligand contact to a 1,2-diacyl-sn-glycero-3-phospho-(1'-sn-glycerol). Helical transmembrane passes span 176–196 (QPTF…ILSL), 206–226 (GEVF…VEGM), and 236–256 (IIRV…ILWI).

The protein belongs to the Lgt family.

Its subcellular location is the cell membrane. It catalyses the reaction L-cysteinyl-[prolipoprotein] + a 1,2-diacyl-sn-glycero-3-phospho-(1'-sn-glycerol) = an S-1,2-diacyl-sn-glyceryl-L-cysteinyl-[prolipoprotein] + sn-glycerol 1-phosphate + H(+). The protein operates within protein modification; lipoprotein biosynthesis (diacylglyceryl transfer). Catalyzes the transfer of the diacylglyceryl group from phosphatidylglycerol to the sulfhydryl group of the N-terminal cysteine of a prolipoprotein, the first step in the formation of mature lipoproteins. In Lactobacillus acidophilus (strain ATCC 700396 / NCK56 / N2 / NCFM), this protein is Phosphatidylglycerol--prolipoprotein diacylglyceryl transferase.